The chain runs to 887 residues: Alanine--tRNA ligase (887 aa).

Zn(2+) is bound by residues histidine 564, histidine 568, cysteine 676, and histidine 680.

This sequence belongs to the class-II aminoacyl-tRNA synthetase family. Zn(2+) serves as cofactor.

The protein localises to the cytoplasm. The catalysed reaction is tRNA(Ala) + L-alanine + ATP = L-alanyl-tRNA(Ala) + AMP + diphosphate. In terms of biological role, catalyzes the attachment of alanine to tRNA(Ala) in a two-step reaction: alanine is first activated by ATP to form Ala-AMP and then transferred to the acceptor end of tRNA(Ala). Also edits incorrectly charged Ser-tRNA(Ala) and Gly-tRNA(Ala) via its editing domain. This chain is Alanine--tRNA ligase, found in Agrobacterium fabrum (strain C58 / ATCC 33970) (Agrobacterium tumefaciens (strain C58)).